The following is an 82-amino-acid chain: MPKRTLQGVVVSDKQAKTIVVRVDRRFTHPIYKKTIRRSKNYHAHDENNQFKPGDMVWIEESKPISKLKRWTVVRGEPKKTA.

This sequence belongs to the universal ribosomal protein uS17 family. As to quaternary structure, part of the 30S ribosomal subunit.

In terms of biological role, one of the primary rRNA binding proteins, it binds specifically to the 5'-end of 16S ribosomal RNA. The polypeptide is Small ribosomal subunit protein uS17 (Rhodopseudomonas palustris (strain TIE-1)).